Reading from the N-terminus, the 689-residue chain is MSRVLVIEQREGEEKTLIQKHIFRPFPNTRRVVIDHLQRLKNFLFRIGDDWYFLFALGVIMALISFTMDFTVSKMLNAHRWLQQELGGNVLLRYLSWIVYPIALVAFSTGFAQSITPHSGGSGIPELKTILSGVILEEYLTIKNFGAKVVGLTCTLSAGSTMFLGKVGPFVHLSSMIAAYLGRMRTSVAGDYENKSKEHEMLVAAAAVGVSTVFGAPISGVLFSVEVMSSHFAIRNYWRGFFAATCGAFVFRLLAVFNSEQETITAVFKTSFKISFPFDLPEMFFFAILGVVCGLIGCAYLFCQRWLLGYVRRNSLTSKLLASDKPMYSALVALLISSITFPESLGQFLASRLTMKELLTSLFDNRTWWISLSQNSSLDRSPLVDPNNLWLEWANPQFTIFGTLAFFIIMKFWMFILATTLPMPAGYFMPVFVFGAAIGRLVGETVALLYPEGIAADGIVNPIIPGGYAWQGAPAYSGAVTHSVSTALLAFEATGQIAHILPVILCVLIANAFTQKLQPSFYDGTIIVKKLPYLPRIRSRDIDSYKVNTEEFMNPDIRVLPREAGFEDVLKVITASDDSEYPVVDNTESQVLVGTVKRPQLIHFLETHESHERAGPTEKENLSEGNLGEACSIEPVTFQLSTWTSLHQAHHLFELLHLQKAFVTKYGRIVGQVTRKEMKKAIEDLANPK.

The Cytoplasmic segment spans residues 1-51 (MSRVLVIEQREGEEKTLIQKHIFRPFPNTRRVVIDHLQRLKNFLFRIGDDW). A run of 2 helical transmembrane segments spans residues 52–83 (YFLFALGVIMALISFTMDFTVSKMLNAHRWLQ) and 92–112 (LRYLSWIVYPIALVAFSTGFA). The helical intramembrane region spans 117–128 (PHSGGSGIPELK). Residue S122 coordinates chloride. Helical transmembrane passes span 142–161 (IKNFGAKVVGLTCTLSAGST) and 162–181 (MFLGKVGPFVHLSSMIAAYL). N194 carries N-linked (GlcNAc...) asparagine glycosylation. Positions 204 to 225 (AAAAVGVSTVFGAPISGVLFSV) form an intramembrane region, helical. Residues 237 to 256 (YWRGFFAATCGAFVFRLLAV) traverse the membrane as a helical segment. Ca(2+)-binding residues include E260, E262, D279, and E282. The next 2 membrane-spanning stretches (helical) occupy residues 283-311 (MFFFAILGVVCGLIGCAYLFCQRWLLGYV) and 326-343 (PMYSALVALLISSITFPE). The segment at residues 350–361 (ASRLTMKELLTS) is an intramembrane region (helical). Transmembrane regions (helical) follow at residues 402–422 (GTLAFFIIMKFWMFILATTLP) and 423–442 (MPAGYFMPVFVFGAAIGRLV). F428 contributes to the chloride binding site. Residues 466–498 (GGYAWQGAPAYSGAVTHSVSTALLAFEATGQIA) constitute an intramembrane region (helical). Residues 502–522 (PVILCVLIANAFTQKLQPSFY) form a helical membrane-spanning segment. Topologically, residues 523 to 689 (DGTIIVKKLP…KAIEDLANPK (167 aa)) are cytoplasmic. CBS domains lie at 553–613 (MNPD…SHER) and 630–689 (ACSI…ANPK).

This sequence belongs to the chloride channel (TC 2.A.49) family. In terms of processing, N-glycosylated on a single asparagine, probably Asn-365 or Asn-375. Expressed in two distinct regions of the kidney; the proximal convoluted tubule and the diluting segment.

It is found in the cell membrane. Its function is as follows. Voltage-gated chloride channel. Chloride channels have several functions including the regulation of cell volume, the stabilization of membrane potential, signal transduction and transepithelial transport. This Xenopus laevis (African clawed frog) protein is Chloride channel protein ClC-Kb (clcnkb).